The sequence spans 315 residues: Aspartate carbamoyltransferase catalytic subunit (315 aa).

2 residues coordinate carbamoyl phosphate: arginine 55 and threonine 56. L-aspartate is bound at residue lysine 83. Carbamoyl phosphate-binding residues include arginine 105, histidine 138, and glutamine 141. Arginine 171 and arginine 225 together coordinate L-aspartate. Positions 266 and 267 each coordinate carbamoyl phosphate.

It belongs to the aspartate/ornithine carbamoyltransferase superfamily. ATCase family. Heterododecamer (2C3:3R2) of six catalytic PyrB chains organized as two trimers (C3), and six regulatory PyrI chains organized as three dimers (R2).

The catalysed reaction is carbamoyl phosphate + L-aspartate = N-carbamoyl-L-aspartate + phosphate + H(+). It functions in the pathway pyrimidine metabolism; UMP biosynthesis via de novo pathway; (S)-dihydroorotate from bicarbonate: step 2/3. Functionally, catalyzes the condensation of carbamoyl phosphate and aspartate to form carbamoyl aspartate and inorganic phosphate, the committed step in the de novo pyrimidine nucleotide biosynthesis pathway. This is Aspartate carbamoyltransferase catalytic subunit from Mycolicibacterium vanbaalenii (strain DSM 7251 / JCM 13017 / BCRC 16820 / KCTC 9966 / NRRL B-24157 / PYR-1) (Mycobacterium vanbaalenii).